Consider the following 159-residue polypeptide: MWKTTDLCDEFENELQICRQSFRSFGKKEQFHGKIATVKVKDDNVLVKEGLQTLPEGTVLVVDGGASTNCALLGDNLAAIAEERKLAGIIVNGYVRDSSELKNINIGILALGTMPNRSVKEGKGDRNISLQFGGVEWKPNDYVYVDEDGVIISEKSLYR.

Substrate-binding positions include 74–77 (GDNL) and Arg96. Asp97 contacts a divalent metal cation.

Belongs to the class II aldolase/RraA-like family. Homotrimer. It depends on a divalent metal cation as a cofactor.

It carries out the reaction 4-hydroxy-4-methyl-2-oxoglutarate = 2 pyruvate. It catalyses the reaction oxaloacetate + H(+) = pyruvate + CO2. Catalyzes the aldol cleavage of 4-hydroxy-4-methyl-2-oxoglutarate (HMG) into 2 molecules of pyruvate. Also contains a secondary oxaloacetate (OAA) decarboxylase activity due to the common pyruvate enolate transition state formed following C-C bond cleavage in the retro-aldol and decarboxylation reactions. This is Putative 4-hydroxy-4-methyl-2-oxoglutarate aldolase from Bacillus cereus (strain ZK / E33L).